Reading from the N-terminus, the 936-residue chain is MTSSMEEDDSISPESISLDTLASIRSLIINADTSDSVISSVFDFLTGLLSRGNSAILHHVLKLLSDLAFRRKELAPQIFDSILSNLLRLHNTVAEASHERAAVESLAVLASLSERTPSIAAALSKIDDEVFASICLGAPISSRLWLLRNADRFNVPSSVLFTLFLGFSKDPYPYIRKVALDGLINICNAGDFNHTHAVEGCYTRAVELLSDAEDSVRSSAVRAVSVWGKVMIASKEEEMNRRDCTDAVFLQLCSVVRDMSVDVRVEVFKAFGIIGTASESIILQTLSKKVLGAGKGKKPQNLLSNGSADVSSAAGVYIHGFEDEFYEVREAAVDSFHSLSVNSIKFPDEAVYLLMDMLYDDYMVVRLKALKALHHIADLGNLKIQETYMPAFLDAIVDTSENIRVEARNILKLAKLPDLKLVNKCIDGVLKSLEMYPQDEPDILSALFHFGQNHTNFLVSMVKRFSEKLGTASGSKAEFNSRQLSASLTLIISAPLSNKQSITSIPPLAFSYSLAMLGKFSSGLHDMMDQDMLLAYLTHCAILSSSSGTEFNKGDVFFHAYRDSNADLAGNPVLLPGKDIPAESKYMACKAELEIGNQALKFVNHILLKIKAAWLLSQSGCSKEALRALRACKQELATLTADSSISKGTLDFICQYVHVIELLVQVWPHFNYSRHISTCSSVEVELLMEEVEIKLMEIRCRFTGLSTEESLVLELVIFGCLLRLYKFEICCRLSCMEKLSSTISQLELHHEQQCTKPSDFLTETKKSLEEFGSSDDINSCRLLDLIKIFKCFSPEQFTFSVNLQCVSAEVEVPGNGPYSPISFVPGLPVAIPCEITLLNVPRDTCLWLRISRNDETCQFVYLDPNLYNGNGREKRFMFTAVTYMTPRAVVFTLRVSIGIECLFEDICYRKQRHGPKHPVAYLCKEREIHLSLVSRT.

Interacts with SHR, MGP, SCR, JKD, CPC, TMO7 and AGL21, but not with LFY or STM.

Its subcellular location is the nucleus. The protein resides in the endosome. The protein localises to the cytoplasm. It is found in the cell cortex. Intracellular shuttle that promotes movement of SHR from the stele into the endodermis. Required for SHR association to endosomes and localization, and for intercellular movement of SHR. The protein is Protein SIEL of Arabidopsis thaliana (Mouse-ear cress).